Here is a 349-residue protein sequence, read N- to C-terminus: Probable transporter vicT (349 aa).

Positions 25–153 (IAAALLHALA…TALAGVVLVL (129 aa)) constitute an EamA domain. The next 9 helical transmembrane spans lie at 49 to 69 (PFTVLQIRLFITVLGCTAYLW), 89 to 109 (AAGGVFGACGFYLSISYLSLS), 111 to 131 (ATVLNFIAPLGAIMLTTYWEG), 133 to 153 (TFAFLDLIACITALAGVVLVL), 179 to 199 (LKGVVSGITGVAGGIVAFSAM), 215 to 235 (FGVSICIVTTAFSTIMPEVVW), 244 to 264 (LLAIIGILGLVMEYLLTAGLG), 269 to 289 (RVTIMIYSQVLWALFLDWAIW), and 294 to 314 (NVLTVLGSMVVVASLAVPYLF).

The protein belongs to the TPT transporter family. SLC35D subfamily.

It localises to the membrane. Functionally, probable transporter; part of the gene cluster that mediates the biosynthesis of the secondary metabolite victorin, the molecular basis for Victoria blight of oats. The polypeptide is Probable transporter vicT (Bipolaris victoriae (strain FI3) (Victoria blight of oats agent)).